The sequence spans 425 residues: Kynureninase (425 aa).

Pyridoxal 5'-phosphate contacts are provided by residues L105, T106, 133-136 (FPSD), D218, H221, and Y243. K244 carries the post-translational modification N6-(pyridoxal phosphate)lysine. Residues W274 and N302 each contribute to the pyridoxal 5'-phosphate site.

This sequence belongs to the kynureninase family. Homodimer. It depends on pyridoxal 5'-phosphate as a cofactor.

It carries out the reaction L-kynurenine + H2O = anthranilate + L-alanine + H(+). The catalysed reaction is 3-hydroxy-L-kynurenine + H2O = 3-hydroxyanthranilate + L-alanine + H(+). It functions in the pathway amino-acid degradation; L-kynurenine degradation; L-alanine and anthranilate from L-kynurenine: step 1/1. The protein operates within cofactor biosynthesis; NAD(+) biosynthesis; quinolinate from L-kynurenine: step 2/3. Catalyzes the cleavage of L-kynurenine (L-Kyn) and L-3-hydroxykynurenine (L-3OHKyn) into anthranilic acid (AA) and 3-hydroxyanthranilic acid (3-OHAA), respectively. In Flavobacterium psychrophilum (strain ATCC 49511 / DSM 21280 / CIP 103535 / JIP02/86), this protein is Kynureninase.